Reading from the N-terminus, the 158-residue chain is C-type lectin galactose-binding isoform (158 aa).

Positions 1–23 (MGRFLLVTLSLLVMAFFLNGANS) are cleaved as a signal peptide. Cystine bridges form between C26/C37, C54/C154, and C129/C146. Positions 33–155 (RNGFCYKVFN…CTALRPFLCQ (123 aa)) constitute a C-type lectin domain. Ca(2+) contacts are provided by Q119, D121, and E127. Residues 119–121 (QPD) carry the Galactose-binding motif. A glycan (N-linked (GlcNAc...) asparagine) is linked at N134. The Ca(2+) site is built by N142 and D143.

It belongs to the true venom lectin family. Dimer. Probably disulfide-linked homodimer. In terms of tissue distribution, expressed by the venom gland.

The protein localises to the secreted. Functionally, galactose-binding lectin that binds to and agglutinates erythrocytes in a calcium-dependent manner. In Pseudechis australis (Mulga snake), this protein is C-type lectin galactose-binding isoform.